The primary structure comprises 445 residues: Phosphoglucosamine mutase (445 aa).

The Phosphoserine intermediate role is filled by S102. Residues S102, D241, D243, and D245 each coordinate Mg(2+). S102 is subject to Phosphoserine.

The protein belongs to the phosphohexose mutase family. Mg(2+) serves as cofactor. In terms of processing, activated by phosphorylation.

It catalyses the reaction alpha-D-glucosamine 1-phosphate = D-glucosamine 6-phosphate. Functionally, catalyzes the conversion of glucosamine-6-phosphate to glucosamine-1-phosphate. The polypeptide is Phosphoglucosamine mutase (Cronobacter sakazakii (strain ATCC BAA-894) (Enterobacter sakazakii)).